The chain runs to 152 residues: Small ribosomal subunit protein uS11A (152 aa).

The disordered stretch occupies residues 131–152; it reads EDVTPIPSDSTRRKGGRRGRRL. Positions 143–152 are enriched in basic residues; sequence RKGGRRGRRL.

Belongs to the universal ribosomal protein uS11 family.

This Anopheles gambiae (African malaria mosquito) protein is Small ribosomal subunit protein uS11A.